Reading from the N-terminus, the 406-residue chain is N-acetylmuramoyl-L-alanine amidase CwlM (406 aa).

Peptidoglycan-binding domain stretches follow at residues 18-83 (SAAV…YRAL) and 105-160 (GDDV…LRSL). One can recognise a MurNAc-LAA domain in the interval 193–370 (IIIDPGRGGV…IAEGILAAVK (178 aa)).

Belongs to the N-acetylmuramoyl-L-alanine amidase 3 family.

The protein resides in the periplasm. The catalysed reaction is Hydrolyzes the link between N-acetylmuramoyl residues and L-amino acid residues in certain cell-wall glycopeptides.. Its pathway is cell wall degradation; peptidoglycan degradation. Functionally, cell-wall hydrolase that hydrolyzes the amide bond between N-acetylmuramic acid and L-alanine in cell-wall glycopeptides. Is able to lyse whole mycobacteria, release peptidoglycan from the cell wall of M.luteus and M.smegmatis, and cleave N-acetylmuramoyl-L-alanyl-D-isoglutamine, releasing free N-acetylmuramic acid and dipeptide. The protein is N-acetylmuramoyl-L-alanine amidase CwlM of Mycobacterium tuberculosis (strain ATCC 25618 / H37Rv).